Consider the following 696-residue polypeptide: Spindle assembly checkpoint component MAD1 (696 aa).

2 disordered regions span residues 1-22 and 394-415; these read MSTG…SINN and QIHA…TENK. The segment covering 402–413 has biased composition (basic and acidic residues); sequence KQQEQEKEENTE.

It belongs to the MAD1 family. As to quaternary structure, component of the mitotic checkpoint complex (MCC).

Its subcellular location is the nucleus. In terms of biological role, central component of the spindle assembly checkpoint which is a feedback control that prevents cells with incompletely assembled spindles from leaving mitosis. This Candida albicans (strain SC5314 / ATCC MYA-2876) (Yeast) protein is Spindle assembly checkpoint component MAD1.